Here is a 233-residue protein sequence, read N- to C-terminus: NAD(P)H-hydrate epimerase (233 aa).

One can recognise a YjeF N-terminal domain in the interval 15 to 218 (SQQFDVELMS…KLQEKYNFIV (204 aa)). Position 67-71 (67-71 (NNGGD)) interacts with (6S)-NADPHX. Residues Asn68 and Asp128 each coordinate K(+). Residues 132 to 138 (GFSFKPP), Tyr143, and Asp161 each bind (6S)-NADPHX. A K(+)-binding site is contributed by Ser164.

Belongs to the NnrE/AIBP family. Requires K(+) as cofactor.

The catalysed reaction is (6R)-NADHX = (6S)-NADHX. It carries out the reaction (6R)-NADPHX = (6S)-NADPHX. In terms of biological role, catalyzes the epimerization of the S- and R-forms of NAD(P)HX, a damaged form of NAD(P)H that is a result of enzymatic or heat-dependent hydration. This is a prerequisite for the S-specific NAD(P)H-hydrate dehydratase to allow the repair of both epimers of NAD(P)HX. In Paramecium tetraurelia, this protein is NAD(P)H-hydrate epimerase.